The sequence spans 302 residues: Stanniocalcin-2 (302 aa).

A signal peptide spans 1-24; it reads MCAERLGQFMTLALVLATFDPARG. The disordered stretch occupies residues 23–44; it reads RGTDATNPPEGPQDRSSQQKGR. N-linked (GlcNAc...) asparagine glycosylation is present at Asn73. The tract at residues 217 to 302 is disordered; it reads KPPTAPPERQ…EQSEYSDIRR (86 aa). The segment covering 227 to 264 has biased composition (basic and acidic residues); sequence PQVDRTKLSRAHHGEAGHHLPEPSSRETGRGAKGERGS. Phosphoserine; by FAM20C occurs at positions 250 and 251. Residue Thr254 is modified to Phosphothreonine; by FAM20C.

This sequence belongs to the stanniocalcin family. Homodimer; disulfide-linked. Expressed in a variety of tissues including muscle, heart, pancreas, kidney, spleen, prostate, small intestine, colon and peripheral blood leukocytes.

Its subcellular location is the secreted. Its function is as follows. Has an anti-hypocalcemic action on calcium and phosphate homeostasis. This chain is Stanniocalcin-2 (STC2), found in Homo sapiens (Human).